We begin with the raw amino-acid sequence, 610 residues long: Glutamine--fructose-6-phosphate aminotransferase [isomerizing] (610 aa).

Cys2 acts as the Nucleophile; for GATase activity in catalysis. The 218-residue stretch at 2 to 219 (CGIVGAVAQR…EGDVAEITRR (218 aa)) folds into the Glutamine amidotransferase type-2 domain. 2 consecutive SIS domains span residues 287–427 (ADEL…LRGM) and 459–600 (LAEG…VDQP). The For Fru-6P isomerization activity role is filled by Lys605.

In terms of assembly, homodimer.

It is found in the cytoplasm. The enzyme catalyses D-fructose 6-phosphate + L-glutamine = D-glucosamine 6-phosphate + L-glutamate. In terms of biological role, catalyzes the first step in hexosamine metabolism, converting fructose-6P into glucosamine-6P using glutamine as a nitrogen source. The protein is Glutamine--fructose-6-phosphate aminotransferase [isomerizing] of Pectobacterium atrosepticum (strain SCRI 1043 / ATCC BAA-672) (Erwinia carotovora subsp. atroseptica).